The sequence spans 226 residues: Enolase-phosphatase E1 (226 aa).

This sequence belongs to the HAD-like hydrolase superfamily. MasA/MtnC family. In terms of assembly, monomer. It depends on Mg(2+) as a cofactor.

It catalyses the reaction 5-methylsulfanyl-2,3-dioxopentyl phosphate + H2O = 1,2-dihydroxy-5-(methylsulfanyl)pent-1-en-3-one + phosphate. It participates in amino-acid biosynthesis; L-methionine biosynthesis via salvage pathway; L-methionine from S-methyl-5-thio-alpha-D-ribose 1-phosphate: step 3/6. Its pathway is amino-acid biosynthesis; L-methionine biosynthesis via salvage pathway; L-methionine from S-methyl-5-thio-alpha-D-ribose 1-phosphate: step 4/6. Bifunctional enzyme that catalyzes the enolization of 2,3-diketo-5-methylthiopentyl-1-phosphate (DK-MTP-1-P) into the intermediate 2-hydroxy-3-keto-5-methylthiopentenyl-1-phosphate (HK-MTPenyl-1-P), which is then dephosphorylated to form the acireductone 1,2-dihydroxy-3-keto-5-methylthiopentene (DHK-MTPene). The sequence is that of Enolase-phosphatase E1 from Shewanella baltica (strain OS223).